The chain runs to 145 residues: Large ribosomal subunit protein uL13 (145 aa).

Belongs to the universal ribosomal protein uL13 family. As to quaternary structure, part of the 50S ribosomal subunit. Interacts weakly with proteins L3 and L6.

Its function is as follows. This protein is one of the early assembly proteins of the 50S ribosomal subunit. Binds to 23S rRNA. In Haloarcula marismortui (strain ATCC 43049 / DSM 3752 / JCM 8966 / VKM B-1809) (Halobacterium marismortui), this protein is Large ribosomal subunit protein uL13.